Reading from the N-terminus, the 181-residue chain is Acetylcholinesterase (181 aa).

Ser76 serves as the catalytic Acyl-ester intermediate. Catalysis depends on Glu132, which acts as the Charge relay system. The interval 162-181 is disordered; sequence WQDQDNGGLPLTGNPTXPHN.

This sequence belongs to the type-B carboxylesterase/lipase family. In terms of processing, the N-terminus is blocked. Expressed by the venom gland. Is also probably expressed by liver and muscle.

It is found in the synapse. The protein localises to the secreted. It localises to the cell membrane. It carries out the reaction acetylcholine + H2O = choline + acetate + H(+). Its function is as follows. In venom, its toxic role is unclear: it could result in less musculatory control by rapidly hydrolyzing acetylcholine, or that it works synergistically with alkaline phosphatase (ALP) in paralyzing prey through hypotension. In muscle, it terminates signal transduction at the neuromuscular junction by rapid hydrolysis of the acetylcholine released into the synaptic cleft. In liver, its function is unclear: it could serve as a safeguard against any diffusion of acetylcholine from synapses into the circulation. In Naja oxiana (Central Asian cobra), this protein is Acetylcholinesterase (ACHE).